A 158-amino-acid chain; its full sequence is MLSPKRVKFRKQQRGRMRGVATRGNTIAFGEFALQAQECGWITSRQIEASRRAMTRYVKRGGKIWIRIFPDKPVTMRPAETRMGSGKGNPEFWVAVIKPGRILFEMGGAEITEDIAKEAMRLAQYKLPIKTKFIGLDDQEKVAGSDKPASVPAITAES.

Belongs to the universal ribosomal protein uL16 family. Part of the 50S ribosomal subunit.

In terms of biological role, binds 23S rRNA and is also seen to make contacts with the A and possibly P site tRNAs. The sequence is that of Large ribosomal subunit protein uL16 from Prochlorococcus marinus (strain MIT 9313).